Here is a 135-residue protein sequence, read N- to C-terminus: Small ribosomal subunit protein uS9 (135 aa).

Over residues 102 to 115 (PLKTEGHLSRDPRA) the composition is skewed to basic and acidic residues. Residues 102–135 (PLKTEGHLSRDPRAKERRKYGLKKARKAPQFSKR) form a disordered region. The segment covering 116–135 (KERRKYGLKKARKAPQFSKR) has biased composition (basic residues).

It belongs to the universal ribosomal protein uS9 family.

This Synechococcus sp. (strain CC9311) protein is Small ribosomal subunit protein uS9.